Reading from the N-terminus, the 305-residue chain is Putative glutamine--fructose-6-phosphate aminotransferase [isomerizing] (305 aa).

Cys2 serves as the catalytic Nucleophile; for GATase activity. The Glutamine amidotransferase type-2 domain occupies 2–305; it reads CGIFGYCNFL…RLCITSAVCE (304 aa).

It catalyses the reaction D-fructose 6-phosphate + L-glutamine = D-glucosamine 6-phosphate + L-glutamate. The protein operates within nucleotide-sugar biosynthesis; UDP-N-acetyl-alpha-D-glucosamine biosynthesis; alpha-D-glucosamine 6-phosphate from D-fructose 6-phosphate: step 1/1. Involved in amino sugar synthesis (formation of chitin, supplies the amino sugars of asparagine-linked oligosaccharides of glycoproteins). This is Putative glutamine--fructose-6-phosphate aminotransferase [isomerizing] from Saccharomyces cerevisiae (strain Lalvin EC1118 / Prise de mousse) (Baker's yeast).